We begin with the raw amino-acid sequence, 110 residues long: uncharacterized protein (110 aa).

The next 3 helical transmembrane spans lie at 4–26 (LVGG…KSIN), 46–68 (ANRY…GLLL), and 72–91 (LFIL…FMLT).

It is found in the cell membrane. This is an uncharacterized protein from Bacillus subtilis (strain 168).